Here is a 292-residue protein sequence, read N- to C-terminus: Thyroxine 5-deiodinase (292 aa).

At 1–30 (VVGEGRGALGGAATMLRSLLLHSLRLCAQT) the chain is on the cytoplasmic side. The helical; Signal-anchor for type II membrane protein transmembrane segment at 31 to 50 (ASCLVLFPRFLGTAFMLWLL) threads the bilayer. The Extracellular segment spans residues 51–292 (DFLCIRKHLL…QLHGPQPRRV (242 aa)). The active site involves U158. U158 is a non-standard amino acid (selenocysteine).

This sequence belongs to the iodothyronine deiodinase family. Monomer. Homodimer. May undergo minor heretodimerization with DIO1 and DIO2.

The protein resides in the cell membrane. The protein localises to the endosome membrane. It catalyses the reaction 3,3',5'-triiodo-L-thyronine + iodide + A + H(+) = L-thyroxine + AH2. The catalysed reaction is 3,3'-diiodo-L-thyronine + iodide + A + H(+) = 3,3',5-triiodo-L-thyronine + AH2. The enzyme catalyses 3-iodo-L-thyronine + iodide + A + H(+) = 3,5-diiodo-L-thyronine + AH2. It carries out the reaction L-thyronine + iodide + A + H(+) = 3-iodo-L-thyronine + AH2. It catalyses the reaction 3',5'-diiodo-L-thyronine + iodide + A + H(+) = 3,3',5'-triiodo-L-thyronine + AH2. The catalysed reaction is 3'-iodo-L-thyronine + iodide + A + H(+) = 3,3'-diiodo-L-thyronine + AH2. The enzyme catalyses 3,3',5'-triiodothyronamine + iodide + A + H(+) = 3,3',5,5'-tetraiodothyronamine + AH2. It carries out the reaction 3',5'-diiodothyronamine + iodide + A + H(+) = 3,3',5'-triiodothyronamine + AH2. It catalyses the reaction 3,3'-diiodothyronamine + iodide + A + H(+) = 3,3',5-triiodothyronamine + AH2. The catalysed reaction is 3-iodothyronamine + iodide + A + H(+) = 3,5-diiodothyronamine + AH2. The enzyme catalyses 3'-iodothyronamine + iodide + A + H(+) = 3,3'-diiodothyronamine + AH2. It carries out the reaction thyronamine + iodide + A + H(+) = 3-iodothyronamine + AH2. Plays a crucial role in the metabolism of thyroid hormones (TH) and has specific roles in TH activation and inactivation by deiodination.Catalyzes the deiodination of L-thyroxine (T4) to 3,3',5'-triiodothyronine (rT3), 3,5,3'-triiodothyronine (T3) to 3,3'-diiodothyronine (3,3'-T2), 3,5-diiodothyronine (3,5-T2) to 3-monoiodothyronine (3-T1), rT3 to 3',5'-diiodothyronine (3',5'-T2) and 3,3'-T2 to 3'-monoiodothyronine (3'-T1) via inner-ring deiodination (IRD). Catalyzes the deiodination of 3-T1 to L-thyronine (T0) via outer-ring deiodination (ORD). Catalyzes the tyrosyl ring deiodinations of 3,3',5,5'-tetraiodothyronamine, 3,3',5'-triiodothyronamine, 3,5,3'-triiodothyronamine, 3,5-diiodothyronamine, 3,3'-diiodothyronamine and 3-iodothyronamine. This is Thyroxine 5-deiodinase (DIO3) from Ovis aries (Sheep).